The following is a 255-amino-acid chain: Fasciclin-like arabinogalactan protein 14 (255 aa).

The first 23 residues, 1–23, serve as a signal peptide directing secretion; it reads MSSSLTIFFFFFASTFLYTSSNS. In terms of domain architecture, FAS1 spans 24–169; that stretch reads FNITNILNEH…ISVLHISSAI (146 aa). N25, N99, N125, and N159 each carry an N-linked (GlcNAc...) asparagine glycan. Residues 179-231 are disordered; the sequence is PTASPLSPVSSPPRPAESPNDDGQDFDEPPSSAPGAAADEPSENAGSANGVSR. A compositionally biased stretch (acidic residues) spans 197–206; that stretch reads PNDDGQDFDE. Polar residues predominate over residues 222-231; sequence NAGSANGVSR. A lipid anchor (GPI-anchor amidated serine) is attached at S225. A propeptide spans 226–255 (removed in mature form); the sequence is ANGVSRNDSQPAFAFTLLMSFIWWFMARLR.

Belongs to the fasciclin-like AGP family.

The protein resides in the cell membrane. May be a cell surface adhesion protein. The protein is Fasciclin-like arabinogalactan protein 14 (FLA14) of Arabidopsis thaliana (Mouse-ear cress).